The primary structure comprises 160 residues: Ureidoglycolate lyase (160 aa).

This sequence belongs to the ureidoglycolate lyase family. As to quaternary structure, homodimer. It depends on Ni(2+) as a cofactor.

The enzyme catalyses (S)-ureidoglycolate = urea + glyoxylate. It functions in the pathway nitrogen metabolism; (S)-allantoin degradation. Functionally, catalyzes the catabolism of the allantoin degradation intermediate (S)-ureidoglycolate, generating urea and glyoxylate. Involved in the utilization of allantoin as nitrogen source. The chain is Ureidoglycolate lyase from Salmonella enteritidis.